The chain runs to 349 residues: Glycerol-3-phosphate dehydrogenase [NAD(+)], cytoplasmic (349 aa).

Residue 10–15 (GSGNWG) coordinates NAD(+). Lysine 120 is a substrate binding site. Alanine 153 lines the NAD(+) pocket. Lysine 204 functions as the Proton acceptor in the catalytic mechanism. Arginine 269 serves as a coordination point for NAD(+). Position 269-270 (269-270 (RN)) interacts with substrate. Residue lysine 289 is modified to N6-succinyllysine. Lysine 296 and glutamine 298 together coordinate NAD(+). At tyrosine 326 the chain carries Phosphotyrosine.

This sequence belongs to the NAD-dependent glycerol-3-phosphate dehydrogenase family. As to quaternary structure, homodimer.

It localises to the cytoplasm. The enzyme catalyses sn-glycerol 3-phosphate + NAD(+) = dihydroxyacetone phosphate + NADH + H(+). Has glycerol-3-phosphate dehydrogenase activity. This Bos taurus (Bovine) protein is Glycerol-3-phosphate dehydrogenase [NAD(+)], cytoplasmic (GPD1).